The sequence spans 181 residues: MSRIGNKEIQVPDSVNVQIQDKNFIVVTGPQGKLEYQFNHKIKILLINTIIKVSRPNNELFMKKIHGTTRALLSNMIEGVEKGFVKRLEIVGLDYKVDLQGDNLILHLGFSHSIKITIPKGIDIEIPKKIKGIHIKGIDKQFVGEFASKIAKLRKPEPYKGKGIRFEGQYVIRKAGKSTKK.

The protein belongs to the universal ribosomal protein uL6 family. As to quaternary structure, part of the 50S ribosomal subunit.

This protein binds to the 23S rRNA, and is important in its secondary structure. It is located near the subunit interface in the base of the L7/L12 stalk, and near the tRNA binding site of the peptidyltransferase center. This chain is Large ribosomal subunit protein uL6, found in Phytoplasma mali (strain AT).